We begin with the raw amino-acid sequence, 332 residues long: Long form salivary protein D7L2 (332 aa).

The first 21 residues, 1–21 (MFPPRKFLLSSFILAALHVTA), serve as a signal peptide directing secretion. Intrachain disulfides connect cysteine 40-cysteine 77 and cysteine 73-cysteine 133. A leukotriene E4-binding site is contributed by tryptophan 61. Leukotriene E4 contacts are provided by glycine 157 and lysine 176. Intrachain disulfides connect cysteine 184–cysteine 219, cysteine 200–cysteine 331, and cysteine 259–cysteine 278. Noradrenaline is bound by residues glutamate 185, arginine 203, and histidine 216. Noradrenaline contacts are provided by aspartate 294 and glutamate 297.

The protein belongs to the PBP/GOBP family. In terms of assembly, interacts with human CD4. As to expression, saliva (at protein level). Female salivary gland (at protein level). Detected in the head and thorax of the female mosquitoes, where the salivary glands are located.

It localises to the secreted. Functionally, modulates blood feeding of female mosquitoes on vertebrate species by binding and sequestering different mediators involved in the host response, such as biogenic amines and eicosanoids. Binds serotonin, histamine, tryptamine, noradrenaline, leukotriene B4, leukotriene C4, leukotriene D4, leukotriene E4 and U-46619, a stable analog of thromboxane A2. Does not bind adrenaline. Exhibits vasodilating activity. Inhibits agonist-induced platelet aggregation but not blood clotting. (Microbial infection) Probably promotes Plasmodium gallinaceum oocyst development in mosquito midgut. The polypeptide is Long form salivary protein D7L2 (Aedes aegypti (Yellowfever mosquito)).